The sequence spans 266 residues: Tryptophan synthase alpha chain (266 aa).

Catalysis depends on proton acceptor residues E49 and D60.

It belongs to the TrpA family. As to quaternary structure, tetramer of two alpha and two beta chains.

The catalysed reaction is (1S,2R)-1-C-(indol-3-yl)glycerol 3-phosphate + L-serine = D-glyceraldehyde 3-phosphate + L-tryptophan + H2O. The protein operates within amino-acid biosynthesis; L-tryptophan biosynthesis; L-tryptophan from chorismate: step 5/5. Functionally, the alpha subunit is responsible for the aldol cleavage of indoleglycerol phosphate to indole and glyceraldehyde 3-phosphate. In Synechococcus elongatus (strain ATCC 33912 / PCC 7942 / FACHB-805) (Anacystis nidulans R2), this protein is Tryptophan synthase alpha chain.